The primary structure comprises 792 residues: Probable beta-D-xylosidase 6 (792 aa).

The signal sequence occupies residues 1-18 (MNLQLTLISLLFFTSAIA). Residues N44, N104, N124, and N239 are each glycosylated (N-linked (GlcNAc...) asparagine). D309 is a catalytic residue. Residues N444 and N618 are each glycosylated (N-linked (GlcNAc...) asparagine).

Belongs to the glycosyl hydrolase 3 family.

The protein localises to the secreted. It localises to the extracellular space. The protein resides in the extracellular matrix. The chain is Probable beta-D-xylosidase 6 (BXL6) from Arabidopsis thaliana (Mouse-ear cress).